Consider the following 956-residue polypeptide: MGDKEEVLEAVLKETVDLENVPIEEVFESLRCSREGLTTEAADERLALFGHNKLEEKKESKFLKFLGFMWNPLSWVMEAAAIMAIALANGGGKPPDWQDFVGIITLLVINSTISFIEENNAGNAAAALMARLAPKAKVLRDGRWGEQDAAILVPGDIISIKLGDIVPADARLLEGDPLKIDQSSLTGESLPVTKGPGDGVYSGSTCKQGELEAVVIATGVHTFFGKAAHLVDTTNHVGHFQQVLTAIGNFCICSIAVGMIIEIVVMYPIQHRAYRPGIDNLLVLLIGGIPIAMPTVLSVTMAIGSHRLSQQGAITKRMTAIEEMAGMDVLCSDKTGTLTLNKLTVDKNLIEVFTKGVDADTVVLMAAQASRLENQDAIDAAIVGMLADPKEARAGVREVHFLPFNPTDKRTALTYIDSDGKMHRVSKGAPEQILNLAHNRAEIERRVHAVIDKFAERGLRSLAVAYQEVPEGTKESAGGPWQFMGLMPLFDPPRHDSAETIRRALNLGVNVKMITGDQLAIGKETGRRLGMGTNMYPSSALLGQHKDESIGALPIDDLIEKADGFAGVFPEHKYEIVKRLQARKHICGMTGDGVNDAPALKKADIGIAVADATDAARSASDIVLTEPGLSVIISAVLTSRAIFQRMKNYTIYAVSITIRIVLGFMLLALIWKFDFPPFMVLIIAILNDGTIMTISKDRVKPSPLPDSWKLSEIFATGVVFGSYMAMMTVIFFWAAYKTDFFPRTFGVSTLEKTAHDDFRKLASAIYLQVSIISQALIFVTRSRSWSYVERPGMLLVVAFILAQLVATLIAVYANWSFAAIEGIGWGWAGVIWLYNIVFYIPLDIIKFLIRYALSGRAWDLVIEQRVAFTRQKDFGKEQRELQWAHAQRTLHGLQAPDAKMFPERTHFNELSQMAEEAKRRAEIARLRELHTLKGHVESVVRLKGLDIETIQQAYTV.

Over 1–65 the chain is Cytoplasmic; the sequence is MGDKEEVLEA…EKKESKFLKF (65 aa). The chain crosses the membrane as a helical span at residues 66–85; the sequence is LGFMWNPLSWVMEAAAIMAI. Topologically, residues 86–97 are extracellular; that stretch reads ALANGGGKPPDW. Residues 98-118 traverse the membrane as a helical segment; that stretch reads QDFVGIITLLVINSTISFIEE. Over 119 to 247 the chain is Cytoplasmic; the sequence is NNAGNAAAAL…GHFQQVLTAI (129 aa). The helical transmembrane segment at 248-268 threads the bilayer; that stretch reads GNFCICSIAVGMIIEIVVMYP. The Extracellular portion of the chain corresponds to 269 to 277; the sequence is IQHRAYRPG. Residues 278–295 form a helical membrane-spanning segment; that stretch reads IDNLLVLLIGGIPIAMPT. Topologically, residues 296-647 are cytoplasmic; it reads VLSVTMAIGS…TSRAIFQRMK (352 aa). Asp333 serves as the catalytic 4-aspartylphosphate intermediate. 2 residues coordinate Mg(2+): Asp592 and Asp596. Residues 648-669 form a helical membrane-spanning segment; sequence NYTIYAVSITIRIVLGFMLLAL. Topologically, residues 670–674 are extracellular; sequence IWKFD. A helical membrane pass occupies residues 675–697; that stretch reads FPPFMVLIIAILNDGTIMTISKD. At 698-713 the chain is on the cytoplasmic side; that stretch reads RVKPSPLPDSWKLSEI. A helical transmembrane segment spans residues 714 to 734; that stretch reads FATGVVFGSYMAMMTVIFFWA. Topologically, residues 735–759 are extracellular; the sequence is AYKTDFFPRTFGVSTLEKTAHDDFR. A helical membrane pass occupies residues 760–780; sequence KLASAIYLQVSIISQALIFVT. Over 781–792 the chain is Cytoplasmic; sequence RSRSWSYVERPG. Residues 793-813 form a helical membrane-spanning segment; it reads MLLVVAFILAQLVATLIAVYA. Residues 814–821 are Extracellular-facing; sequence NWSFAAIE. The chain crosses the membrane as a helical span at residues 822 to 842; that stretch reads GIGWGWAGVIWLYNIVFYIPL. Over 843–956 the chain is Cytoplasmic; sequence DIIKFLIRYA…IETIQQAYTV (114 aa). Thr889 carries the post-translational modification Phosphothreonine. Ser938 bears the Phosphoserine mark. The segment at 954–956 is interaction with 14-3-3 proteins; that stretch reads YTV. Thr955 carries the phosphothreonine modification.

It belongs to the cation transport ATPase (P-type) (TC 3.A.3) family. Type IIIA subfamily. Binds to 14-3-3 proteins. The binding is induced by phosphorylation of Thr-955. Binding to 14-3-3 proteins activates the H(+)-ATPase. In terms of tissue distribution, expressed in guard cells, mesophyll cells, leaves and roots.

It is found in the membrane. The enzyme catalyses ATP + H2O + H(+)(in) = ADP + phosphate + 2 H(+)(out). Functionally, the plasma membrane H(+) ATPase of plants and fungi generates a proton gradient that drives the active transport of nutrients by H(+)-symport. The resulting external acidification and/or internal alkinization may mediate growth responses. The chain is ATPase 11, plasma membrane-type (AHA11) from Arabidopsis thaliana (Mouse-ear cress).